The chain runs to 643 residues: Maternal embryonic leucine zipper kinase (643 aa).

One can recognise a Protein kinase domain in the interval 11 to 263; that stretch reads YELYETIGTG…MRNLLNHPWV (253 aa). ATP is bound by residues 17-25 and Lys-40; that span reads IGTGGFAKV. Thr-56 carries the post-translational modification Phosphothreonine; by autocatalysis. The active-site Proton acceptor is the Asp-132. Tyr-163 bears the Phosphotyrosine; by autocatalysis mark. Thr-167 carries the post-translational modification Phosphothreonine; by autocatalysis. 2 positions are modified to phosphoserine; by autocatalysis: Ser-171 and Ser-253. Positions 282 to 321 are UBA-like; the sequence is LDEDCVTELSVHHRSSRQTMEDLISSWQYDHLTATYLLLL. The autoinhibitory region stretch occupies residues 326-643; the sequence is RGKPARLQLL…VEDILSGCKM (318 aa). Phosphoserine; by autocatalysis is present on residues Ser-336 and Ser-343. Ser-352 bears the Phosphoserine mark. Ser-399 and Ser-423 each carry phosphoserine; by autocatalysis. Thr-486 carries the post-translational modification Phosphothreonine; by autocatalysis. A Phosphoserine modification is found at Ser-490. Ser-497 is subject to Phosphoserine; by autocatalysis. The residue at position 510 (Thr-510) is a Phosphothreonine. Ser-521 is subject to Phosphoserine; by autocatalysis. Residue Thr-531 is modified to Phosphothreonine; by autocatalysis. In terms of domain architecture, KA1 spans 594–643; the sequence is SDFGKVTMQFELEVCQLQRPDVVGIRRQRLKGDAWVYKRLVEDILSGCKM.

The protein belongs to the protein kinase superfamily. CAMK Ser/Thr protein kinase family. SNF1 subfamily. Monomer. Interacts with ZNF622 and PPP1R8. Post-translationally, autophosphorylated: autophosphorylation of the T-loop at Thr-167 and Ser-171 is required for activation. In terms of tissue distribution, expressed in testis, ovary, thymus, spleen and T-cell. Expressed by neural progenitors: highly enriched in cultures containing multipotent progenitors.

It localises to the cell membrane. It catalyses the reaction L-tyrosyl-[protein] + ATP = O-phospho-L-tyrosyl-[protein] + ADP + H(+). It carries out the reaction L-seryl-[protein] + ATP = O-phospho-L-seryl-[protein] + ADP + H(+). The catalysed reaction is L-threonyl-[protein] + ATP = O-phospho-L-threonyl-[protein] + ADP + H(+). Activated by autophosphorylation of the T-loop at Thr-167 and Ser-171: in contrast to other members of the SNF1 subfamily, phosphorylation at Thr-167 is not mediated by STK11/LKB1 but via autophosphorylation instead. Inhibited by calcium-binding. Kinase activity is also regulated by reducing agents: dithiothreitol (DTT) or reduced glutathione are required for kinase activity in vitro; such dependence is however not due to the presence of disulfide bonds. In terms of biological role, serine/threonine-protein kinase involved in various processes such as cell cycle regulation, self-renewal of stem cells, apoptosis and splicing regulation. Has a broad substrate specificity; phosphorylates BCL2L14, CDC25B, MAP3K5/ASK1 and ZNF622. Acts as an activator of apoptosis by phosphorylating and activating MAP3K5/ASK1. Acts as a regulator of cell cycle, notably by mediating phosphorylation of CDC25B, promoting localization of CDC25B to the centrosome and the spindle poles during mitosis. Plays a key role in cell proliferation. Required for proliferation of embryonic and postnatal multipotent neural progenitors. Phosphorylates and inhibits BCL2L14. Also involved in the inhibition of spliceosome assembly during mitosis by phosphorylating ZNF622, thereby contributing to its redirection to the nucleus. May also play a role in primitive hematopoiesis. This is Maternal embryonic leucine zipper kinase (Melk) from Mus musculus (Mouse).